The chain runs to 249 residues: Phosphomannomutase 1 (249 aa).

Asp12 acts as the Nucleophile in catalysis. The Mg(2+) site is built by Asp12 and Asp14. Residue Asp14 is the Proton donor/acceptor of the active site. Alpha-D-mannose 1-phosphate-binding residues include Arg21, Arg123, Arg134, Arg141, Ser179, and Asp181. Residues Asp209, Asp223, and Thr227 each coordinate Mg(2+).

The protein belongs to the eukaryotic PMM family. In terms of assembly, homodimer.

The protein resides in the cytoplasm. The catalysed reaction is alpha-D-mannose 1-phosphate = D-mannose 6-phosphate. The protein operates within nucleotide-sugar biosynthesis; GDP-alpha-D-mannose biosynthesis; alpha-D-mannose 1-phosphate from D-fructose 6-phosphate: step 2/2. Its function is as follows. Involved in the synthesis of the GDP-mannose and dolichol-phosphate-mannose required for a number of critical mannosyl transfer reactions. This chain is Phosphomannomutase 1 (pmmA), found in Dictyostelium discoideum (Social amoeba).